A 393-amino-acid chain; its full sequence is MKWLLVAVLTSLTIFSALTQSHLLHGSPVNSLCADLIHPANYSCTEHSIQTKDGYILALQRVASLGPRLQSGPPVLLQHGLFMAGDVWFLNSPKESLGFILADHGFDVWVGNVRGTRYSYGHVTLSDTDKEFWDWSWQDLAMYDLAEMIQYLYSISNSKIFLVGHSQGTIMSFAALTQPHVAEMVEAAALLCPISYLDHVTAPLVERMVFMHLDQMVVALGLHQINFRSDMLVKLVDSLCEGHMDCTDFLTSITGTNCCFNASKIEYYLDYEPHPSSVKNIRHLFQMIRKGTFAQYDYGYFKNLRTYGLSKPPEFILSHIPASLPMWMGYGGTDGLADVTDVEHTLAELPSSPELLYLEDYGHIDFVLGSSAKEDVYKHMIQFFRAKVKSSSW.

An N-terminal signal peptide occupies residues 1 to 20 (MKWLLVAVLTSLTIFSALTQ). N41 is a glycosylation site (N-linked (GlcNAc...) asparagine). Residue S166 is the Nucleophile of the active site. An N-linked (GlcNAc...) asparagine glycan is attached at N261. Active-site charge relay system residues include D334 and H363.

The protein belongs to the AB hydrolase superfamily. Lipase family. Expressed in seedlings, roots, leaves, flowers and siliques. Specifically expressed in the epidermis.

The protein localises to the secreted. The catalysed reaction is a triacylglycerol + H2O = a diacylglycerol + a fatty acid + H(+). The enzyme catalyses 1,2,3-tributanoylglycerol + H2O = dibutanoylglycerol + butanoate + H(+). It catalyses the reaction 1,2,3-trioctanoylglycerol + H2O = dioctanoylglycerol + octanoate + H(+). Its pathway is lipid metabolism; glycerolipid metabolism. Functionally, triacylglycerol (TAG) lipase active on triolein, trioctanoin, tributyrin and 1,3-Diolein, but not on phospho- and galactolipids. Involved but dispensable for TAG storage breakdown during seed germination. The protein is Triacylglycerol lipase 1 of Arabidopsis thaliana (Mouse-ear cress).